The chain runs to 277 residues: Putative phosphoenolpyruvate synthase regulatory protein (277 aa).

Residue 152–159 (GVSRCGKT) coordinates ADP.

It belongs to the pyruvate, phosphate/water dikinase regulatory protein family. PSRP subfamily.

The enzyme catalyses [pyruvate, water dikinase] + ADP = [pyruvate, water dikinase]-phosphate + AMP + H(+). It catalyses the reaction [pyruvate, water dikinase]-phosphate + phosphate + H(+) = [pyruvate, water dikinase] + diphosphate. In terms of biological role, bifunctional serine/threonine kinase and phosphorylase involved in the regulation of the phosphoenolpyruvate synthase (PEPS) by catalyzing its phosphorylation/dephosphorylation. In Chromohalobacter salexigens (strain ATCC BAA-138 / DSM 3043 / CIP 106854 / NCIMB 13768 / 1H11), this protein is Putative phosphoenolpyruvate synthase regulatory protein.